Consider the following 626-residue polypeptide: Putative folylpolyglutamate synthase (626 aa).

An ATP-binding site is contributed by 144 to 147; sequence GKGS. Residues serine 168, glutamate 235, and histidine 263 each contribute to the Mg(2+) site. ATP-binding residues include arginine 412 and aspartate 430.

Belongs to the folylpolyglutamate synthase family.

It catalyses the reaction (6S)-5,6,7,8-tetrahydrofolyl-(gamma-L-Glu)(n) + L-glutamate + ATP = (6S)-5,6,7,8-tetrahydrofolyl-(gamma-L-Glu)(n+1) + ADP + phosphate + H(+). The protein operates within cofactor biosynthesis; tetrahydrofolylpolyglutamate biosynthesis. Its function is as follows. Conversion of folates to polyglutamate derivatives. This chain is Putative folylpolyglutamate synthase (folC), found in Dictyostelium discoideum (Social amoeba).